The primary structure comprises 179 residues: Large ribosomal subunit protein uL5 (179 aa).

Belongs to the universal ribosomal protein uL5 family. Part of the 50S ribosomal subunit; part of the 5S rRNA/L5/L18/L25 subcomplex. Contacts the 5S rRNA and the P site tRNA. Forms a bridge to the 30S subunit in the 70S ribosome.

In terms of biological role, this is one of the proteins that bind and probably mediate the attachment of the 5S RNA into the large ribosomal subunit, where it forms part of the central protuberance. In the 70S ribosome it contacts protein S13 of the 30S subunit (bridge B1b), connecting the 2 subunits; this bridge is implicated in subunit movement. Contacts the P site tRNA; the 5S rRNA and some of its associated proteins might help stabilize positioning of ribosome-bound tRNAs. This Actinobacillus pleuropneumoniae serotype 5b (strain L20) protein is Large ribosomal subunit protein uL5.